The sequence spans 105 residues: Large ribosomal subunit protein uL24 (105 aa).

It belongs to the universal ribosomal protein uL24 family. As to quaternary structure, part of the 50S ribosomal subunit.

Functionally, one of two assembly initiator proteins, it binds directly to the 5'-end of the 23S rRNA, where it nucleates assembly of the 50S subunit. Its function is as follows. One of the proteins that surrounds the polypeptide exit tunnel on the outside of the subunit. The protein is Large ribosomal subunit protein uL24 of Xanthomonas oryzae pv. oryzae (strain MAFF 311018).